Here is a 323-residue protein sequence, read N- to C-terminus: Arginase (323 aa).

Positions 119, 142, 144, and 146 each coordinate Mn(2+). Residues His-144–Asn-148, Ser-155–Asn-157, and Asp-198 contribute to the substrate site. Residues Asp-247 and Asp-249 each contribute to the Mn(2+) site. Substrate contacts are provided by Thr-261 and Glu-292.

This sequence belongs to the arginase family. As to quaternary structure, homotrimer. Mn(2+) is required as a cofactor.

It carries out the reaction L-arginine + H2O = urea + L-ornithine. Its pathway is nitrogen metabolism; urea cycle; L-ornithine and urea from L-arginine: step 1/1. The chain is Arginase (car1) from Schizosaccharomyces pombe (strain 972 / ATCC 24843) (Fission yeast).